A 72-amino-acid polypeptide reads, in one-letter code: MTKEENIEMQGIVLDTLPNTMFKVELENKHVVLAHISGKMRKNYIRILTGDKVTVELTPYDLSKGRIIFRSR.

The region spanning 1–72 (MTKEENIEMQ…SKGRIIFRSR (72 aa)) is the S1-like domain.

The protein belongs to the IF-1 family. In terms of assembly, component of the 30S ribosomal translation pre-initiation complex which assembles on the 30S ribosome in the order IF-2 and IF-3, IF-1 and N-formylmethionyl-tRNA(fMet); mRNA recruitment can occur at any time during PIC assembly.

It is found in the cytoplasm. In terms of biological role, one of the essential components for the initiation of protein synthesis. Stabilizes the binding of IF-2 and IF-3 on the 30S subunit to which N-formylmethionyl-tRNA(fMet) subsequently binds. Helps modulate mRNA selection, yielding the 30S pre-initiation complex (PIC). Upon addition of the 50S ribosomal subunit IF-1, IF-2 and IF-3 are released leaving the mature 70S translation initiation complex. The protein is Translation initiation factor IF-1 of Wigglesworthia glossinidia brevipalpis.